Reading from the N-terminus, the 201-residue chain is Putative ferritin heavy polypeptide-like 19 (201 aa).

Residues 1–123 enclose the Ferritin-like diiron domain; that stretch reads MAFYFDQDDA…GYLSNLHKMG (123 aa).

The protein belongs to the ferritin family.

The polypeptide is Putative ferritin heavy polypeptide-like 19 (FTH1P19) (Homo sapiens (Human)).